The following is an 876-amino-acid chain: Alanine--tRNA ligase (876 aa).

Zn(2+) contacts are provided by H564, H568, C666, and H670.

It belongs to the class-II aminoacyl-tRNA synthetase family. Homotetramer. Zn(2+) is required as a cofactor.

It is found in the cytoplasm. It carries out the reaction tRNA(Ala) + L-alanine + ATP = L-alanyl-tRNA(Ala) + AMP + diphosphate. Its function is as follows. Catalyzes the attachment of alanine to tRNA(Ala) in a two-step reaction: alanine is first activated by ATP to form Ala-AMP and then transferred to the acceptor end of tRNA(Ala). Also edits incorrectly charged Ser-tRNA(Ala) and Gly-tRNA(Ala) via its editing domain. This chain is Alanine--tRNA ligase, found in Salmonella choleraesuis (strain SC-B67).